The primary structure comprises 61 residues: Small ribosomal subunit protein uS14 (61 aa).

Positions 24, 27, 40, and 43 each coordinate Zn(2+).

This sequence belongs to the universal ribosomal protein uS14 family. Zinc-binding uS14 subfamily. In terms of assembly, part of the 30S ribosomal subunit. Contacts proteins S3 and S10. The cofactor is Zn(2+).

In terms of biological role, binds 16S rRNA, required for the assembly of 30S particles and may also be responsible for determining the conformation of the 16S rRNA at the A site. The chain is Small ribosomal subunit protein uS14 from Maridesulfovibrio salexigens (strain ATCC 14822 / DSM 2638 / NCIMB 8403 / VKM B-1763) (Desulfovibrio salexigens).